Consider the following 172-residue polypeptide: uncharacterized protein (172 aa).

Over 1-101 (MEHVSKRSIG…RYDINTRPLV (101 aa)) the chain is Lumenal. The chain crosses the membrane as a helical span at residues 102 to 122 (VVLAISIVFFGCLLVLKDIII). The Cytoplasmic portion of the chain corresponds to 123 to 145 (QSSENILSVSKWKIIGASFMGTP). Residues 146-164 (YTGLLTGLVGPLLSPFSAV) traverse the membrane as a helical segment. Residues 165–172 (SSWLSFIF) are Lumenal-facing.

It is found in the endoplasmic reticulum membrane. This is an uncharacterized protein from Saccharomyces cerevisiae (strain ATCC 204508 / S288c) (Baker's yeast).